Here is a 317-residue protein sequence, read N- to C-terminus: sn-1-specific diacylglycerol lipase ABHD11 (317 aa).

A mitochondrion-targeting transit peptide spans 1–20 (MSNFAMSALCRVFTRGAPCG). The AB hydrolase-1 domain maps to 69-304 (PLVFLHGLFG…ASHWIHADKP (236 aa)). Active-site charge relay system residues include Ser142, Glu238, and His297.

Belongs to the AB hydrolase superfamily. Phosphorylated.

The protein resides in the mitochondrion. It localises to the mitochondrion matrix. The enzyme catalyses 1-octadecanoyl-2-(5Z,8Z,11Z,14Z-eicosatetraenoyl)-sn-glycerol + H2O = 2-(5Z,8Z,11Z,14Z-eicosatetraenoyl)-glycerol + octadecanoate + H(+). The catalysed reaction is a 1,2-diacyl-sn-glycerol + H2O = a 2-acylglycerol + a fatty acid + H(+). It carries out the reaction a 1,3-diacyl-sn-glycerol + H2O = a 1-acyl-sn-glycerol + a fatty acid + H(+). It catalyses the reaction 1-octadecanoyl-2-(9Z-octadecenoyl)-sn-glycerol + H2O = 2-(9Z-octadecenoyl)-glycerol + octadecanoate + H(+). The enzyme catalyses 1-octadecanoyl-2-(4Z,7Z,10Z,13Z,16Z,19Z-docosahexaenoyl)-sn-glycerol + H2O = 2-(4Z,7Z,10Z,13Z,16Z,19Z-docosahexaenoyl)-glycerol + octadecanoate + H(+). The catalysed reaction is 1,2-didecanoylglycerol + H2O = decanoylglycerol + decanoate + H(+). Catalyzes the hydrolysis of diacylglycerol in vitro and may function as a key regulator in lipid metabolism, namely by regulating the intracellular levels of diacylglycerol. 1,2-diacyl-sn-glycerols are the preferred substrate over 1,3-diacyl-sn-glycerols. The enzyme hydrolyzes stearate in preference to palmitate from the sn-1 position of 1,2-diacyl-sn-glycerols. The chain is sn-1-specific diacylglycerol lipase ABHD11 from Danio rerio (Zebrafish).